An 866-amino-acid polypeptide reads, in one-letter code: MLGGIIDTITGSSKQSRLKGTVVLMRKNVLDLNDFGATVIDGLGEFLGKGVTCQLISSTAVDPNNGNRGKVGAEASLEQWLTSSLPSLTTGESRFGVTFDWDVDKLGVPGAIIVKNHHSNEFFLKTITLDDVPGRAGAVVFLANSWVYPADKYRYDRVFFANDAYLPSQMPAALKPYRDDELRNLRGDDQQGPYEEHDRVYRYDVYNDLGSPDSGNPRPILGGSPDTPYPRRGRTGRKPTTTDPDSESRLSLVEQIYVPRDERFGHLKMADFLGYSIKAIAEGIVPAIRTYVDTTPGEFDSFQDILDLYEGGLKLPDVPALEELRKRFPLQLVKDLLPAAGDYILKLPMPQIIKQDKEAWRTDEEFAREVLAGVNPMMITRLTEFPPKSSLDPSKFGDHTSMITAAHIGSNLEGLTVQQALDSNRLYILDHHDRFMPFLIDVNGLEGNFIYATRTLFFLRGDGTLAPLAIELSEPMIQGDVTAAKSTVYTPASTGVEAWVWQLAKAYVAVNDSGWHQLISHWLNTHAVMEPFVIATNRQLSVTHPVHKLLSPHYRDTMTINALARQTLINAGGIFEMTVFPGKYALWMSSMVYKNWNFTEQGLPADLIKRGVAVEDATSPYKVRLLIKDYPYAADGLEIWHAIEQWVGEYLAIYYTDDGVLRGDAELQAWWAEVREVGHGDLKGAAWWPRMDAVSELRDACTTIIWIASALHAAVNFGQYPYAGYLPNRPTVSRRRMPEPGTEAYGELGRDPERAFIRTITSQLQTIIGISLIEVLSKHSSDEVYLGQRDTPAWTSDARALEAFRRFSDRLVEIEGKVVGMNGDAGLKNRNGPAEFPYMLLYPNTSDVTGAAAGITAKGIPNSISI.

Residues 33-161 (NDFGATVIDG…KYRYDRVFFA (129 aa)) form the PLAT domain. The region spanning 164 to 866 (AYLPSQMPAA…AKGIPNSISI (703 aa)) is the Lipoxygenase domain. A disordered region spans residues 206–250 (YNDLGSPDSGNPRPILGGSPDTPYPRRGRTGRKPTTTDPDSESRL). Fe cation-binding residues include His521, His526, His712, Asn716, and Ile866.

It belongs to the lipoxygenase family. It depends on Fe cation as a cofactor.

It carries out the reaction (9Z,12Z)-octadecadienoate + O2 = (9S)-hydroperoxy-(10E,12Z)-octadecadienoate. It participates in lipid metabolism; oxylipin biosynthesis. In terms of biological role, plant lipoxygenase may be involved in a number of diverse aspects of plant physiology including growth and development, pest resistance, and senescence or responses to wounding. Catalyzes the hydroperoxidation of lipids containing a cis,cis-1,4-pentadiene structure. In Oryza sativa subsp. japonica (Rice), this protein is Putative linoleate 9S-lipoxygenase 3.